Consider the following 612-residue polypeptide: Kelch repeat and BTB domain-containing protein 3 (612 aa).

The region spanning 52-119 (YDFKIIMKDE…AYTGKTKITD (68 aa)) is the BTB domain. A BACK domain is found at 154–254 (CLQLLSISDS…QLSEETLQDC (101 aa)). Kelch repeat units lie at residues 295–341 (KYIF…SSYG), 343–403 (KIFL…MALD), 404–454 (RLFV…TCQN), 456–506 (IYVL…KAVP), and 552–599 (KIYI…VIQF).

This is Kelch repeat and BTB domain-containing protein 3 from Homo sapiens (Human).